A 278-amino-acid polypeptide reads, in one-letter code: Tryptophan synthase alpha chain (278 aa).

Catalysis depends on proton acceptor residues glutamate 50 and aspartate 61.

Belongs to the TrpA family. In terms of assembly, tetramer of two alpha and two beta chains.

The enzyme catalyses (1S,2R)-1-C-(indol-3-yl)glycerol 3-phosphate + L-serine = D-glyceraldehyde 3-phosphate + L-tryptophan + H2O. It functions in the pathway amino-acid biosynthesis; L-tryptophan biosynthesis; L-tryptophan from chorismate: step 5/5. Its function is as follows. The alpha subunit is responsible for the aldol cleavage of indoleglycerol phosphate to indole and glyceraldehyde 3-phosphate. This Rhodopseudomonas palustris (strain BisB5) protein is Tryptophan synthase alpha chain.